Reading from the N-terminus, the 354-residue chain is Peptide chain release factor 1 (354 aa).

Position 230 is an N5-methylglutamine (Q230). Positions 282 to 301 are disordered; it reads KQASDAIKKQMIGSGDRSER.

It belongs to the prokaryotic/mitochondrial release factor family. Methylated by PrmC. Methylation increases the termination efficiency of RF1.

It localises to the cytoplasm. Functionally, peptide chain release factor 1 directs the termination of translation in response to the peptide chain termination codons UAG and UAA. The sequence is that of Peptide chain release factor 1 from Leptospira borgpetersenii serovar Hardjo-bovis (strain L550).